Here is a 349-residue protein sequence, read N- to C-terminus: Isopentenyl-diphosphate delta-isomerase (349 aa).

Residue Arg9–Lys10 participates in substrate binding. FMN contacts are provided by residues Ala65–Thr67, Ser95, and Asn124. Ser95–His97 lines the substrate pocket. Residue Gln154 participates in substrate binding. Residue Glu155 participates in Mg(2+) binding. FMN-binding positions include Lys186, Ser211, Thr216, Gly262–Arg264, and Ser283–Arg284.

The protein belongs to the IPP isomerase type 2 family. In terms of assembly, homooctamer. Dimer of tetramers. FMN is required as a cofactor. The cofactor is NADPH. Mg(2+) serves as cofactor.

The protein localises to the cytoplasm. It carries out the reaction isopentenyl diphosphate = dimethylallyl diphosphate. Its function is as follows. Involved in the biosynthesis of isoprenoids. Catalyzes the 1,3-allylic rearrangement of the homoallylic substrate isopentenyl (IPP) to its allylic isomer, dimethylallyl diphosphate (DMAPP). The sequence is that of Isopentenyl-diphosphate delta-isomerase from Staphylococcus aureus (strain N315).